A 430-amino-acid polypeptide reads, in one-letter code: NAD(P)(+) glycohydrolase toxin Tse6 (430 aa).

Helical transmembrane passes span 17-37 (FGVA…AAVV), 46-66 (LAAV…FQIV), and 193-213 (LLLA…IGGL).

As to quaternary structure, interacts with Tsi6, VgrG1a, EagT6 and EF-Tu.

The protein localises to the membrane. The enzyme catalyses NAD(+) + H2O = ADP-D-ribose + nicotinamide + H(+). Type VI secretion exported toxin that acts as a glycohydrolase on bacterial target cells and degrades the essential dinucleotides NAD(+) and NADP(+), thereby inducing bacteriostasis. The activity resides in the C-terminal region that is initially neutralized by the cognate immunity protein Tsi6. This chain is NAD(P)(+) glycohydrolase toxin Tse6, found in Pseudomonas aeruginosa (strain ATCC 15692 / DSM 22644 / CIP 104116 / JCM 14847 / LMG 12228 / 1C / PRS 101 / PAO1).